Reading from the N-terminus, the 508-residue chain is Putative inorganic phosphate transporter 1-13 (508 aa).

Over 1–22 (MAGNQQLRVLHALDIARTQLYH) the chain is Cytoplasmic. A helical membrane pass occupies residues 23–43 (FIAIVIAGMGFFTDAYDLFSI). Residues 44–64 (SLVADLLGHVYYHGELPRNIH) are Extracellular-facing. A helical membrane pass occupies residues 65-85 (AAVTGIALCGTVPGQLVFGWL). The Cytoplasmic segment spans residues 86 to 93 (GDKMGRKR). A helical transmembrane segment spans residues 94-114 (VYGITLLLMVVSSLASGLSFS). The Extracellular portion of the chain corresponds to 115 to 117 (KHE). The helical transmembrane segment at 118 to 138 (GMNIIAVLCFFRFWLGVSIGG) threads the bilayer. Residues 139–159 (DYPLSATIMSEYANKRTRGAF) lie on the Cytoplasmic side of the membrane. Residues 160-180 (IAAVFAMQGFGNLAAGIIGMI) traverse the membrane as a helical segment. Residues 181–192 (VSAAFKHSSASK) are Extracellular-facing. Residues 193–213 (IDYAWRIILMFGAIPAALTYH) form a helical membrane-spanning segment. The Cytoplasmic portion of the chain corresponds to 214 to 277 (WRMKMPETAR…FEFLHRHGLH (64 aa)). A helical transmembrane segment spans residues 278-298 (LLGTTVCWFVLDVTFYSLNIF). Residues 299-328 (MKNIFTEVGLLPRLDSEYHHTLQRMITMTA) lie on the Extracellular side of the membrane. Residues 329 to 349 (VHTFISLCGALPGYFFTVAFV) form a helical membrane-spanning segment. Topologically, residues 350–354 (DRIGR) are cytoplasmic. A helical membrane pass occupies residues 355–375 (VKIQLIGFTMMTVFMLCLAIP). Topologically, residues 376–389 (YDQWLRHKNKYGFA) are extracellular. The chain crosses the membrane as a helical span at residues 390 to 410 (VMYGLTFFFANFGPNTTTFII). The Cytoplasmic portion of the chain corresponds to 411 to 424 (PAEIFPARLRSTCH). The chain crosses the membrane as a helical span at residues 425–445 (GISGAVGKIGAIVGVFGFLYT). At 446 to 450 (EYHIR) the chain is on the extracellular side. Residues 451 to 471 (IFLFVLIGCNLVGFIFTLLLP) form a helical membrane-spanning segment. The Cytoplasmic segment spans residues 472 to 508 (ESKGKSLEDLTGEIEEFQEEDEGSEVALSRPIHTVPL).

It belongs to the major facilitator superfamily. Phosphate:H(+) symporter (TC 2.A.1.9) family.

It is found in the membrane. Functionally, high-affinity transporter for external inorganic phosphate. This is Putative inorganic phosphate transporter 1-13 (PHT1-13) from Oryza sativa subsp. japonica (Rice).